The following is a 400-amino-acid chain: Carbamoyl phosphate synthase small chain (400 aa).

A CPSase region spans residues M1 to A199. L-glutamine-binding residues include S66, G250, and G252. The 196-residue stretch at R200–N395 folds into the Glutamine amidotransferase type-1 domain. Catalysis depends on C278, which acts as the Nucleophile. 5 residues coordinate L-glutamine: F279, Q282, N320, G322, and F323. Residues H368 and E370 contribute to the active site.

It belongs to the CarA family. As to quaternary structure, composed of two chains; the small (or glutamine) chain promotes the hydrolysis of glutamine to ammonia, which is used by the large (or ammonia) chain to synthesize carbamoyl phosphate. Tetramer of heterodimers (alpha,beta)4.

The catalysed reaction is hydrogencarbonate + L-glutamine + 2 ATP + H2O = carbamoyl phosphate + L-glutamate + 2 ADP + phosphate + 2 H(+). The enzyme catalyses L-glutamine + H2O = L-glutamate + NH4(+). It functions in the pathway amino-acid biosynthesis; L-arginine biosynthesis; carbamoyl phosphate from bicarbonate: step 1/1. The protein operates within pyrimidine metabolism; UMP biosynthesis via de novo pathway; (S)-dihydroorotate from bicarbonate: step 1/3. Its function is as follows. Small subunit of the glutamine-dependent carbamoyl phosphate synthetase (CPSase). CPSase catalyzes the formation of carbamoyl phosphate from the ammonia moiety of glutamine, carbonate, and phosphate donated by ATP, constituting the first step of 2 biosynthetic pathways, one leading to arginine and/or urea and the other to pyrimidine nucleotides. The small subunit (glutamine amidotransferase) binds and cleaves glutamine to supply the large subunit with the substrate ammonia. This chain is Carbamoyl phosphate synthase small chain, found in Corynebacterium efficiens (strain DSM 44549 / YS-314 / AJ 12310 / JCM 11189 / NBRC 100395).